Reading from the N-terminus, the 240-residue chain is 45 kDa antigen (240 aa).

2 Fibronectin type-III domains span residues E1–L109 and A110–H210.

The sequence is that of 45 kDa antigen from Taenia ovis (Sheep tapeworm).